The primary structure comprises 299 residues: Protease HtpX homolog (299 aa).

Transmembrane regions (helical) follow at residues 15–35 and 37–57; these read MFLT…VLWQ and GVSY…QYYF. Histidine 140 contributes to the Zn(2+) binding site. The active site involves glutamate 141. Histidine 144 serves as a coordination point for Zn(2+). The next 2 membrane-spanning stretches (helical) occupy residues 158–178 and 187–207; these read FFAT…GAFG and NNIM…YFLI. Glutamate 215 contributes to the Zn(2+) binding site.

The protein belongs to the peptidase M48B family. Zn(2+) serves as cofactor.

The protein resides in the cell membrane. In Moorella thermoacetica (strain ATCC 39073 / JCM 9320), this protein is Protease HtpX homolog.